The following is a 117-amino-acid chain: uncharacterized protein (117 aa).

It localises to the cytoplasm. It is found in the nucleus. This is an uncharacterized protein from Schizosaccharomyces pombe (strain 972 / ATCC 24843) (Fission yeast).